Here is a 161-residue protein sequence, read N- to C-terminus: Large ribosomal subunit protein uL16 (161 aa).

The interval 140 to 161 (LNKGNYKPAKTPVTADDSESSS) is disordered.

This sequence belongs to the universal ribosomal protein uL16 family. As to quaternary structure, part of the 50S ribosomal subunit.

In terms of biological role, binds 23S rRNA and is also seen to make contacts with the A and possibly P site tRNAs. In Prochlorococcus marinus (strain NATL1A), this protein is Large ribosomal subunit protein uL16.